We begin with the raw amino-acid sequence, 207 residues long: Superoxide dismutase [Mn] (207 aa).

Mn(2+) contacts are provided by H28, H76, D160, and H164.

Belongs to the iron/manganese superoxide dismutase family. Mn(2+) serves as cofactor.

It carries out the reaction 2 superoxide + 2 H(+) = H2O2 + O2. In terms of biological role, destroys superoxide anion radicals which are normally produced within the cells and which are toxic to biological systems. The polypeptide is Superoxide dismutase [Mn] (sodA) (Nocardia asteroides).